The chain runs to 652 residues: DNA ligase (652 aa).

NAD(+) is bound by residues 29–33, 78–79, and Glu107; these read DSEYD and SL. Lys109 (N6-AMP-lysine intermediate) is an active-site residue. NAD(+) is bound by residues Arg130, Glu164, Lys278, and Lys302. Zn(2+) is bound by residues Cys395, Cys398, Cys413, and Cys418. The 76-residue stretch at 577-652 folds into the BRCT domain; that stretch reads VADAALSGLT…VRDEAWLESL (76 aa).

This sequence belongs to the NAD-dependent DNA ligase family. LigA subfamily. It depends on Mg(2+) as a cofactor. Mn(2+) is required as a cofactor.

It catalyses the reaction NAD(+) + (deoxyribonucleotide)n-3'-hydroxyl + 5'-phospho-(deoxyribonucleotide)m = (deoxyribonucleotide)n+m + AMP + beta-nicotinamide D-nucleotide.. DNA ligase that catalyzes the formation of phosphodiester linkages between 5'-phosphoryl and 3'-hydroxyl groups in double-stranded DNA using NAD as a coenzyme and as the energy source for the reaction. It is essential for DNA replication and repair of damaged DNA. This is DNA ligase from Streptococcus pneumoniae (strain CGSP14).